Consider the following 148-residue polypeptide: Lipoprotein MlpH (148 aa).

Positions 1–17 (MKIINILFCLFLLMLNG) are cleaved as a signal peptide. A lipid anchor (N-palmitoyl cysteine) is attached at cysteine 18. A lipid anchor (S-diacylglycerol cysteine) is attached at cysteine 18. Positions 26–61 (LKNNAQQTKSRRKRDLTQKEVTQEKPKSKEELLREK) are disordered. The segment covering 40-61 (DLTQKEVTQEKPKSKEELLREK) has biased composition (basic and acidic residues).

This sequence belongs to the Multicopy lipoprotein (Mlp) family.

Its subcellular location is the cell outer membrane. An outer membrane protein that may participate in pathogenesis. Some human Lyme disease patients have antibodies against this protein. The Mlp proteins probably undergo intragenic recombination, generating new alleles. The protein is Lipoprotein MlpH of Borreliella burgdorferi (strain ATCC 35210 / DSM 4680 / CIP 102532 / B31) (Borrelia burgdorferi).